A 256-amino-acid chain; its full sequence is Ribosomal RNA large subunit methyltransferase E (256 aa).

S-adenosyl-L-methionine-binding residues include G50, W52, D69, D85, and D108. K148 acts as the Proton acceptor in catalysis. A TRAM domain is found at 195–253 (SLRKGDVVDVTIDAMGKTGDGIAHVDDFVVFVKGGSVGDKLKIKITDVKPSFAFADIVE).

This sequence belongs to the class I-like SAM-binding methyltransferase superfamily. RNA methyltransferase RlmE family.

It is found in the cytoplasm. It carries out the reaction uridine(2552) in 23S rRNA + S-adenosyl-L-methionine = 2'-O-methyluridine(2552) in 23S rRNA + S-adenosyl-L-homocysteine + H(+). Its function is as follows. Specifically methylates the uridine in position 2552 of 23S rRNA at the 2'-O position of the ribose in the fully assembled 50S ribosomal subunit. The protein is Ribosomal RNA large subunit methyltransferase E of Methanocella arvoryzae (strain DSM 22066 / NBRC 105507 / MRE50).